The following is a 261-amino-acid chain: Phosphoribosylaminoimidazole-succinocarboxamide synthase (261 aa).

Belongs to the SAICAR synthetase family.

It catalyses the reaction 5-amino-1-(5-phospho-D-ribosyl)imidazole-4-carboxylate + L-aspartate + ATP = (2S)-2-[5-amino-1-(5-phospho-beta-D-ribosyl)imidazole-4-carboxamido]succinate + ADP + phosphate + 2 H(+). It functions in the pathway purine metabolism; IMP biosynthesis via de novo pathway; 5-amino-1-(5-phospho-D-ribosyl)imidazole-4-carboxamide from 5-amino-1-(5-phospho-D-ribosyl)imidazole-4-carboxylate: step 1/2. The polypeptide is Phosphoribosylaminoimidazole-succinocarboxamide synthase (Novosphingobium aromaticivorans (strain ATCC 700278 / DSM 12444 / CCUG 56034 / CIP 105152 / NBRC 16084 / F199)).